We begin with the raw amino-acid sequence, 294 residues long: MSVEKPVAAGRQNSKATGRHKGWQAKLHMQLECAITGRGMKTVMAELHHYGPLRVQRPFYPEQDTAHIYLLHPPGGVVGGDGLDISITASSQAHGLLTTPGATKFYRSAGQTAHVSQTLTVQAGGTLEWFPQENIFFPGARVQMDTRIDLHGDAHFMGWEISCLGRPVNSEVFHEGKIDARFRISRDRKPLLIERLKVDQPSHLNAASGLRNFPMQAIFVATGSNEELLEQARECIEKQATDMPCGLTLIDDILVMRVLGTRCEKIQALMLPVWQLLRQATLNKPAVIPRIWNT.

A disordered region spans residues 1 to 22 (MSVEKPVAAGRQNSKATGRHKG).

The protein belongs to the UreD family. In terms of assembly, ureD, UreF and UreG form a complex that acts as a GTP-hydrolysis-dependent molecular chaperone, activating the urease apoprotein by helping to assemble the nickel containing metallocenter of UreC. The UreE protein probably delivers the nickel.

The protein localises to the cytoplasm. Required for maturation of urease via the functional incorporation of the urease nickel metallocenter. This is Urease accessory protein UreD from Alcanivorax borkumensis (strain ATCC 700651 / DSM 11573 / NCIMB 13689 / SK2).